Here is a 131-residue protein sequence, read N- to C-terminus: Small ribosomal subunit protein bS6m (131 aa).

The protein belongs to the bacterial ribosomal protein bS6 family. Component of the mitochondrial small ribosomal subunit (mt-SSU). Mature yeast 74S mitochondrial ribosomes consist of a small (37S) and a large (54S) subunit. The 37S small subunit contains a 15S ribosomal RNA (15S mt-rRNA) and 34 different proteins. The 54S large subunit contains a 21S rRNA (21S mt-rRNA) and 46 different proteins.

It is found in the mitochondrion. Its function is as follows. Component of the mitochondrial ribosome (mitoribosome), a dedicated translation machinery responsible for the synthesis of mitochondrial genome-encoded proteins, including at least some of the essential transmembrane subunits of the mitochondrial respiratory chain. The mitoribosomes are attached to the mitochondrial inner membrane and translation products are cotranslationally integrated into the membrane. This Saccharomyces cerevisiae (strain ATCC 204508 / S288c) (Baker's yeast) protein is Small ribosomal subunit protein bS6m (MRP17).